The chain runs to 565 residues: Urocanate hydratase (565 aa).

Residues 61–62, Gln139, 185–187, Glu205, Arg210, 251–252, 272–276, 282–283, and Tyr331 contribute to the NAD(+) site; these read GG, GMG, NA, QTSAH, and YL. The active site involves Cys419. The tract at residues 453 to 472 is disordered; it reads LDSGSVASPNRETESMRDGS. The segment covering 463 to 472 has biased composition (basic and acidic residues); it reads RETESMRDGS. Gly501 is a binding site for NAD(+).

This sequence belongs to the urocanase family. The cofactor is NAD(+).

Its subcellular location is the cytoplasm. It carries out the reaction 4-imidazolone-5-propanoate = trans-urocanate + H2O. It participates in amino-acid degradation; L-histidine degradation into L-glutamate; N-formimidoyl-L-glutamate from L-histidine: step 2/3. Its function is as follows. Catalyzes the conversion of urocanate to 4-imidazolone-5-propionate. In Pseudomonas syringae pv. syringae (strain B728a), this protein is Urocanate hydratase.